The following is a 293-amino-acid chain: 33 kDa chaperonin (293 aa).

2 disulfides stabilise this stretch: Cys-238–Cys-240 and Cys-271–Cys-274.

The protein belongs to the HSP33 family. Post-translationally, under oxidizing conditions two disulfide bonds are formed involving the reactive cysteines. Under reducing conditions zinc is bound to the reactive cysteines and the protein is inactive.

The protein localises to the cytoplasm. Its function is as follows. Redox regulated molecular chaperone. Protects both thermally unfolding and oxidatively damaged proteins from irreversible aggregation. Plays an important role in the bacterial defense system toward oxidative stress. This chain is 33 kDa chaperonin, found in Staphylococcus epidermidis (strain ATCC 35984 / DSM 28319 / BCRC 17069 / CCUG 31568 / BM 3577 / RP62A).